Here is a 275-residue protein sequence, read N- to C-terminus: 4-hydroxy-tetrahydrodipicolinate reductase (275 aa).

Residues 13 to 18 and 108 to 110 contribute to the NAD(+) site; these read GAGGKM and GTT. Histidine 164 serves as the catalytic Proton donor/acceptor. Histidine 165 is a binding site for (S)-2,3,4,5-tetrahydrodipicolinate. The active-site Proton donor is the lysine 168. Position 174 to 175 (174 to 175) interacts with (S)-2,3,4,5-tetrahydrodipicolinate; that stretch reads GT.

The protein belongs to the DapB family.

Its subcellular location is the cytoplasm. The enzyme catalyses (S)-2,3,4,5-tetrahydrodipicolinate + NAD(+) + H2O = (2S,4S)-4-hydroxy-2,3,4,5-tetrahydrodipicolinate + NADH + H(+). The catalysed reaction is (S)-2,3,4,5-tetrahydrodipicolinate + NADP(+) + H2O = (2S,4S)-4-hydroxy-2,3,4,5-tetrahydrodipicolinate + NADPH + H(+). Its pathway is amino-acid biosynthesis; L-lysine biosynthesis via DAP pathway; (S)-tetrahydrodipicolinate from L-aspartate: step 4/4. Its function is as follows. Catalyzes the conversion of 4-hydroxy-tetrahydrodipicolinate (HTPA) to tetrahydrodipicolinate. The protein is 4-hydroxy-tetrahydrodipicolinate reductase of Picosynechococcus sp. (strain ATCC 27264 / PCC 7002 / PR-6) (Agmenellum quadruplicatum).